A 334-amino-acid chain; its full sequence is L-lactate dehydrogenase C chain (334 aa).

Residues 30 to 58 (GQVGMACAVSVLLKELADELALVDILEDK), Arg100, and Asn139 each bind NAD(+). Substrate is bound by residues Asn139 and Arg170. Residue His194 is the Proton acceptor of the active site. Residue Thr249 coordinates substrate.

It belongs to the LDH/MDH superfamily. LDH family. In terms of assembly, homotetramer.

It is found in the cytoplasm. The catalysed reaction is (S)-lactate + NAD(+) = pyruvate + NADH + H(+). The protein operates within fermentation; pyruvate fermentation to lactate; (S)-lactate from pyruvate: step 1/1. The protein is L-lactate dehydrogenase C chain (ldhc) of Xenopus laevis (African clawed frog).